Here is a 346-residue protein sequence, read N- to C-terminus: Phosphoribosylformylglycinamidine cyclo-ligase (346 aa).

It belongs to the AIR synthase family.

The protein resides in the cytoplasm. It catalyses the reaction 2-formamido-N(1)-(5-O-phospho-beta-D-ribosyl)acetamidine + ATP = 5-amino-1-(5-phospho-beta-D-ribosyl)imidazole + ADP + phosphate + H(+). It functions in the pathway purine metabolism; IMP biosynthesis via de novo pathway; 5-amino-1-(5-phospho-D-ribosyl)imidazole from N(2)-formyl-N(1)-(5-phospho-D-ribosyl)glycinamide: step 2/2. The polypeptide is Phosphoribosylformylglycinamidine cyclo-ligase (Bacillus thuringiensis subsp. konkukian (strain 97-27)).